We begin with the raw amino-acid sequence, 210 residues long: Riboflavin kinase (210 aa).

Positions Met1–Ser81 are H-T-H motif-like. The riboflavin kinase stretch occupies residues Ile82–Leu210. Gly91–Ala96 serves as a coordination point for CDP. Mg(2+)-binding residues include Thr120 and Asn122. FMN-binding residues include Thr177 and Glu185. Val190–Arg193 contacts CDP.

Belongs to the archaeal riboflavin kinase family. Mg(2+) is required as a cofactor.

It carries out the reaction riboflavin + CTP = CDP + FMN + H(+). It functions in the pathway cofactor biosynthesis; FMN biosynthesis; FMN from riboflavin (CTP route): step 1/1. Its function is as follows. Catalyzes the CTP-dependent phosphorylation of riboflavin (vitamin B2) to form flavin mononucleotide (FMN). The sequence is that of Riboflavin kinase (ribK) from Pyrobaculum arsenaticum (strain DSM 13514 / JCM 11321 / PZ6).